The primary structure comprises 515 residues: Maturase K (515 aa).

Belongs to the intron maturase 2 family. MatK subfamily.

It is found in the plastid. Its subcellular location is the chloroplast. Its function is as follows. Usually encoded in the trnK tRNA gene intron. Probably assists in splicing its own and other chloroplast group II introns. The chain is Maturase K from Pinus sibirica (Siberian pine).